A 62-amino-acid chain; its full sequence is Short neurotoxin 1 (62 aa).

The disordered stretch occupies residues 1 to 20 (LECHNQQSSEPPTTTRCSGG). Disulfide bonds link Cys-3–Cys-24, Cys-17–Cys-41, Cys-43–Cys-54, and Cys-55–Cys-60.

It belongs to the three-finger toxin family. Short-chain subfamily. Type I alpha-neurotoxin sub-subfamily. In terms of tissue distribution, expressed by the venom gland.

Its subcellular location is the secreted. Binds to muscle nicotinic acetylcholine receptor (nAChR) and inhibit acetylcholine from binding to the receptor, thereby impairing neuromuscular transmission. The sequence is that of Short neurotoxin 1 from Naja mossambica (Mozambique spitting cobra).